The primary structure comprises 379 residues: UDP-4-amino-4-deoxy-L-arabinose--oxoglutarate aminotransferase (379 aa).

Lys-182 carries the N6-(pyridoxal phosphate)lysine modification.

It belongs to the DegT/DnrJ/EryC1 family. ArnB subfamily. In terms of assembly, homodimer. Pyridoxal 5'-phosphate serves as cofactor.

It catalyses the reaction UDP-4-amino-4-deoxy-beta-L-arabinose + 2-oxoglutarate = UDP-beta-L-threo-pentopyranos-4-ulose + L-glutamate. It participates in nucleotide-sugar biosynthesis; UDP-4-deoxy-4-formamido-beta-L-arabinose biosynthesis; UDP-4-deoxy-4-formamido-beta-L-arabinose from UDP-alpha-D-glucuronate: step 2/3. The protein operates within bacterial outer membrane biogenesis; lipopolysaccharide biosynthesis. Functionally, catalyzes the conversion of UDP-4-keto-arabinose (UDP-Ara4O) to UDP-4-amino-4-deoxy-L-arabinose (UDP-L-Ara4N). The modified arabinose is attached to lipid A and is required for resistance to polymyxin and cationic antimicrobial peptides. This Salmonella choleraesuis (strain SC-B67) protein is UDP-4-amino-4-deoxy-L-arabinose--oxoglutarate aminotransferase.